A 65-amino-acid chain; its full sequence is Muscarinic m1-toxin2 (65 aa).

4 disulfides stabilise this stretch: Cys3/Cys24, Cys17/Cys42, Cys46/Cys57, and Cys58/Cys63.

Belongs to the three-finger toxin family. Short-chain subfamily. Aminergic toxin sub-subfamily. Monomer. As to expression, expressed by the venom gland.

It localises to the secreted. Its function is as follows. Binds irreversibly and specifically to M1 (CHRM1) muscarinic acetylcholine receptors, blocking further binding of antagonists and preventing the action of agonists. This chain is Muscarinic m1-toxin2, found in Dendroaspis angusticeps (Eastern green mamba).